A 980-amino-acid chain; its full sequence is NACHT, LRR and PYD domains-containing protein 7 (980 aa).

The Pyrin domain occupies 1–93 (MTSPQLEWTL…CKMAKAEMME (93 aa)). The tract at residues 104–123 (ELGDAEEDSELAKPGEKEGW) is disordered. The segment covering 113-123 (ELAKPGEKEGW) has biased composition (basic and acidic residues). One can recognise an NACHT domain in the interval 172–491 (YTVVLHGPAG…LEKEEGEDRD (320 aa)). 178–185 (GPAGVGKT) serves as a coordination point for ATP. 9 LRR repeats span residues 614 to 638 (CQDL…DFEL), 674 to 697 (NSNL…ILCD), 760 to 784 (KCNL…FFYV), 788 to 810 (NQSL…MLLY), 817 to 840 (KHFL…DLAA), 845 to 868 (SKKL…FLCE), 874 to 897 (DCKL…YLSE), 902 to 928 (ACSL…ALEN), and 933 to 957 (LKHL…VKEK).

This sequence belongs to the NLRP family. As to quaternary structure, directly interacts with CASP1 and IL1B. Expressed in numerous tissues including uterus and ovary, with low levels in heart and brain. Not detected in skeletal muscle.

Inhibits CASP1/caspase-1-dependent IL1B secretion. This is NACHT, LRR and PYD domains-containing protein 7 (NLRP7) from Homo sapiens (Human).